Consider the following 85-residue polypeptide: Glutaredoxin (85 aa).

The region spanning 1-85 (MQTVTMYTGP…EGGLDGLLNP (85 aa)) is the Glutaredoxin domain. Cys12 and Cys15 are joined by a disulfide.

It belongs to the glutaredoxin family. In terms of assembly, monomer.

The protein resides in the cytoplasm. In terms of biological role, has a glutathione-disulfide oxidoreductase activity in the presence of NADPH and glutathione reductase. Reduces low molecular weight disulfides and proteins. The chain is Glutaredoxin (grx) from Neisseria meningitidis serogroup B (strain ATCC BAA-335 / MC58).